A 143-amino-acid polypeptide reads, in one-letter code: Ribonuclease H (143 aa).

The RNase H type-1 domain maps to 1–136 (MQEIEIFCDG…CDSLAKLEAQ (136 aa)). Positions 9, 47, 69, and 128 each coordinate Mg(2+).

Belongs to the RNase H family. In terms of assembly, monomer. It depends on Mg(2+) as a cofactor.

It is found in the cytoplasm. It carries out the reaction Endonucleolytic cleavage to 5'-phosphomonoester.. Its function is as follows. Endonuclease that specifically degrades the RNA of RNA-DNA hybrids. The sequence is that of Ribonuclease H from Helicobacter acinonychis (strain Sheeba).